We begin with the raw amino-acid sequence, 83 residues long: Small ribosomal subunit protein bS18A (83 aa).

This sequence belongs to the bacterial ribosomal protein bS18 family. In terms of assembly, part of the 30S ribosomal subunit. Forms a tight heterodimer with protein bS6.

Binds as a heterodimer with protein bS6 to the central domain of the 16S rRNA, where it helps stabilize the platform of the 30S subunit. This chain is Small ribosomal subunit protein bS18A, found in Mycolicibacterium vanbaalenii (strain DSM 7251 / JCM 13017 / BCRC 16820 / KCTC 9966 / NRRL B-24157 / PYR-1) (Mycobacterium vanbaalenii).